The chain runs to 652 residues: Gametogenetin (652 aa).

Disordered stretches follow at residues 1–39 (MGNL…MTSQ), 52–237 (PGSA…DSES), 251–273 (PSLA…GGGG), 291–473 (QGPL…GHKE), and 488–576 (LAAD…GAAN). Basic and acidic residues-rich tracts occupy residues 18–30 (QPSD…RRTS) and 124–133 (RLLEASHRGQ). An interaction with GGNBP1 region spans residues 123-486 (RRLLEASHRG…APTAAPALPP (364 aa)). Pro residues-rich tracts occupy residues 138 to 149 (SLRPLKPPPPPR) and 163 to 178 (QFPP…PPLP). Polar residues predominate over residues 201–212 (ESQAGPRNQGQT). 3 stretches are compositionally biased toward low complexity: residues 213–230 (AGRA…GEMA), 251–267 (PSLA…AKAS), and 299–312 (ARPL…AQEA). Position 389 is a phosphoserine (Ser-389). Residues 407–422 (APALLAPPTFIFPAPT) are compositionally biased toward low complexity. Pro residues-rich tracts occupy residues 428 to 466 (RPGP…PPLT) and 495 to 513 (APSP…PVSA). Residues 491 to 652 (DQAPAPSPAP…HYDLQATHSN (162 aa)) are interactions with ZNF403/GGNBP2 and OAZ3. Residues 523–532 (TRTRRNKGSR) are compositionally biased toward basic residues. Residues 538 to 552 (TRKDGLHGDGPRERA) are compositionally biased toward basic and acidic residues.

In terms of assembly, interacts with FANCL, GGNBP1 and ZNF403/GGNBP2.

Functionally, may be involved in spermatogenesis. This is Gametogenetin (GGN) from Homo sapiens (Human).